We begin with the raw amino-acid sequence, 487 residues long: Glutamyl-tRNA(Gln) amidotransferase subunit A (487 aa).

Residues Lys75 and Ser150 each act as charge relay system in the active site. Catalysis depends on Ser174, which acts as the Acyl-ester intermediate.

This sequence belongs to the amidase family. GatA subfamily. Heterotrimer of A, B and C subunits.

It catalyses the reaction L-glutamyl-tRNA(Gln) + L-glutamine + ATP + H2O = L-glutaminyl-tRNA(Gln) + L-glutamate + ADP + phosphate + H(+). Allows the formation of correctly charged Gln-tRNA(Gln) through the transamidation of misacylated Glu-tRNA(Gln) in organisms which lack glutaminyl-tRNA synthetase. The reaction takes place in the presence of glutamine and ATP through an activated gamma-phospho-Glu-tRNA(Gln). This chain is Glutamyl-tRNA(Gln) amidotransferase subunit A, found in Syntrophomonas wolfei subsp. wolfei (strain DSM 2245B / Goettingen).